Reading from the N-terminus, the 97-residue chain is Citrate lyase acyl carrier protein (97 aa).

At S14 the chain carries O-(phosphoribosyl dephospho-coenzyme A)serine.

The protein belongs to the CitD family. Oligomer with a subunit composition of (alpha,beta,gamma)6.

Its subcellular location is the cytoplasm. Functionally, covalent carrier of the coenzyme of citrate lyase. The chain is Citrate lyase acyl carrier protein from Cronobacter sakazakii (strain ATCC BAA-894) (Enterobacter sakazakii).